Here is a 119-residue protein sequence, read N- to C-terminus: Ribonuclease P protein component (119 aa).

The protein belongs to the RnpA family. As to quaternary structure, consists of a catalytic RNA component (M1 or rnpB) and a protein subunit.

It catalyses the reaction Endonucleolytic cleavage of RNA, removing 5'-extranucleotides from tRNA precursor.. Functionally, RNaseP catalyzes the removal of the 5'-leader sequence from pre-tRNA to produce the mature 5'-terminus. It can also cleave other RNA substrates such as 4.5S RNA. The protein component plays an auxiliary but essential role in vivo by binding to the 5'-leader sequence and broadening the substrate specificity of the ribozyme. The protein is Ribonuclease P protein component of Dictyoglomus turgidum (strain DSM 6724 / Z-1310).